A 369-amino-acid chain; its full sequence is Chorismate synthase (369 aa).

Residues arginine 48 and arginine 54 each contribute to the NADP(+) site. FMN contacts are provided by residues 125 to 127 (RSS), 238 to 239 (NA), glycine 283, 298 to 302 (KPTSS), and arginine 324.

Belongs to the chorismate synthase family. Homotetramer. Requires FMNH2 as cofactor.

The catalysed reaction is 5-O-(1-carboxyvinyl)-3-phosphoshikimate = chorismate + phosphate. It participates in metabolic intermediate biosynthesis; chorismate biosynthesis; chorismate from D-erythrose 4-phosphate and phosphoenolpyruvate: step 7/7. In terms of biological role, catalyzes the anti-1,4-elimination of the C-3 phosphate and the C-6 proR hydrogen from 5-enolpyruvylshikimate-3-phosphate (EPSP) to yield chorismate, which is the branch point compound that serves as the starting substrate for the three terminal pathways of aromatic amino acid biosynthesis. This reaction introduces a second double bond into the aromatic ring system. This is Chorismate synthase from Acidiphilium cryptum (strain JF-5).